We begin with the raw amino-acid sequence, 562 residues long: Arf-GAP domain and FG repeat-containing protein 1 (562 aa).

One can recognise an Arf-GAP domain in the interval 11-135; it reads EKHLKMLRDM…WYVPPEQAKV (125 aa). A C4-type zinc finger spans residues 29–52; sequence CFDCDQRGPTYVNMTVGSFVCTSC. S167 carries the post-translational modification Phosphoserine. The disordered stretch occupies residues 168–194; the sequence is APALHLNKGTPSQSPVVGRSQAQQQEK. Polar residues predominate over residues 176–191; that stretch reads GTPSQSPVVGRSQAQQ. Phosphothreonine is present on T177. S181 and S362 each carry phosphoserine. S367 carries an O-linked (GlcNAc) serine glycan.

In terms of assembly, interacts with EPS15R and EPS15. Interacts with FCHO1. Post-translationally, O-glycosylated.

The protein resides in the nucleus. It is found in the cytoplasmic vesicle. Functionally, required for vesicle docking or fusion during acrosome biogenesis. May play a role in RNA trafficking or localization. This is Arf-GAP domain and FG repeat-containing protein 1 (AGFG1) from Bos taurus (Bovine).